We begin with the raw amino-acid sequence, 701 residues long: Polyribonucleotide nucleotidyltransferase (701 aa).

The Mg(2+) site is built by Asp-487 and Asp-493. The KH domain maps to 553 to 612 (PRLYTLRINPDKIRDVIGKGGSVIRALTEETGTSIDIAEDGLITIASVSAEGAEEAKRRI). The region spanning 622-692 (GKIYEGTVVK…ERGRIRLSIK (71 aa)) is the S1 motif domain.

Belongs to the polyribonucleotide nucleotidyltransferase family. Mg(2+) serves as cofactor.

It is found in the cytoplasm. It catalyses the reaction RNA(n+1) + phosphate = RNA(n) + a ribonucleoside 5'-diphosphate. Its function is as follows. Involved in mRNA degradation. Catalyzes the phosphorolysis of single-stranded polyribonucleotides processively in the 3'- to 5'-direction. The chain is Polyribonucleotide nucleotidyltransferase from Laribacter hongkongensis (strain HLHK9).